A 111-amino-acid polypeptide reads, in one-letter code: Iron-sulfur cluster assembly protein CyaY (111 aa).

It belongs to the frataxin family.

Functionally, involved in iron-sulfur (Fe-S) cluster assembly. May act as a regulator of Fe-S biogenesis. The chain is Iron-sulfur cluster assembly protein CyaY from Cupriavidus necator (strain ATCC 17699 / DSM 428 / KCTC 22496 / NCIMB 10442 / H16 / Stanier 337) (Ralstonia eutropha).